The primary structure comprises 525 residues: Lysine--tRNA ligase (525 aa).

The short motif at Ala40–Ser48 is the 'HIGH' region element. The 'KMSKS' region motif lies at Lys295 to Ser299. ATP is bound at residue Lys298.

Belongs to the class-I aminoacyl-tRNA synthetase family.

It localises to the cytoplasm. The catalysed reaction is tRNA(Lys) + L-lysine + ATP = L-lysyl-tRNA(Lys) + AMP + diphosphate. The polypeptide is Lysine--tRNA ligase (lysS) (Cenarchaeum symbiosum (strain A)).